A 192-amino-acid chain; its full sequence is Thymidylate kinase (192 aa).

Residue 7-14 participates in ATP binding; sequence GIDCVGKS.

It belongs to the thymidylate kinase family.

The enzyme catalyses dTMP + ATP = dTDP + ADP. In terms of biological role, phosphorylation of dTMP to form dTDP in both de novo and salvage pathways of dTTP synthesis. In Campylobacter jejuni subsp. jejuni serotype O:2 (strain ATCC 700819 / NCTC 11168), this protein is Thymidylate kinase (tmk).